We begin with the raw amino-acid sequence, 202 residues long: Recoverin (202 aa).

Glycine 2 carries N-myristoyl glycine lipidation. Cysteine 39 carries the post-translational modification Cysteine sulfenic acid (-SOH). 4 consecutive EF-hand domains span residues 41–59 (SGRITRQEFESIYSKFFPD), 61–96 (DPKAYAQHVFRSFDANSDGTLDFKEYVIALHMTTAG), 97–132 (KPTQKLEWAFSLYDVDGNGTISKNEVLEIVMAIFKM), and 147–182 (TPEKRAEKIWAFFGKKEDDKLTEEEFIEGTLANKEI). Residues aspartate 74, asparagine 76, aspartate 78, threonine 80, glutamate 85, aspartate 110, aspartate 112, asparagine 114, threonine 116, and glutamate 121 each coordinate Ca(2+). An interaction with GRK1 region spans residues 189–192 (EPQK).

It belongs to the recoverin family. Homodimer; disulfide-linked. Homodimerization is caused by prolonged intense illumination. May form a complex composed of RHO, GRK1 and RCVRN in a Ca(2+)-dependent manner; RCVRN prevents the interaction between GRK1 and RHO. Interacts (via C-terminus) with GRK1 (via N-terminus); the interaction is Ca(2+)-dependent. The N-terminal glycine is linked to one of four different types of acyl groups. The most abundant is myristoleate (14:1), but 14:0, 14:2, and 12:0 acyl residues are also present. The Ca(2+) induced exposure of the myristoyl group, known as the calcium-myristoyl switch, promotes RCVRN binding to the photoreceptor cell membranes only when intracellular Ca(2+) concentration is high. In terms of processing, oxidation on Cys-39 occurs in response to prolonged intense illumination and results in the formation of disulfide homodimers, and to a lesser extent disulfide-linked heterodimers. As to expression, expressed in rod photoreceptors in the retina (at protein level).

It localises to the photoreceptor inner segment. The protein localises to the cell projection. It is found in the cilium. The protein resides in the photoreceptor outer segment. Its subcellular location is the photoreceptor outer segment membrane. It localises to the perikaryon. Functionally, acts as a calcium sensor and regulates phototransduction of cone and rod photoreceptor cells. Modulates light sensitivity of cone photoreceptor in dark and dim conditions. In response to high Ca(2+) levels induced by low light levels, prolongs RHO/rhodopsin activation in rod photoreceptor cells by binding to and inhibiting GRK1-mediated phosphorylation of RHO/rhodopsin. Plays a role in scotopic vision/enhances vision in dim light by enhancing signal transfer between rod photoreceptors and rod bipolar cells. Improves rod photoreceptor sensitivity in dim light and mediates response of rod photoreceptors to facilitate detection of change and motion in bright light. The sequence is that of Recoverin (Rcvrn) from Mus musculus (Mouse).